The sequence spans 144 residues: Nucleoside diphosphate kinase (144 aa).

Residues Lys11, Phe59, Arg87, Thr93, Arg104, and Asn114 each contribute to the ATP site. The Pros-phosphohistidine intermediate role is filled by His117.

This sequence belongs to the NDK family. In terms of assembly, homotetramer. The cofactor is Mg(2+).

Its subcellular location is the cytoplasm. The enzyme catalyses a 2'-deoxyribonucleoside 5'-diphosphate + ATP = a 2'-deoxyribonucleoside 5'-triphosphate + ADP. The catalysed reaction is a ribonucleoside 5'-diphosphate + ATP = a ribonucleoside 5'-triphosphate + ADP. In terms of biological role, major role in the synthesis of nucleoside triphosphates other than ATP. The ATP gamma phosphate is transferred to the NDP beta phosphate via a ping-pong mechanism, using a phosphorylated active-site intermediate. This is Nucleoside diphosphate kinase from Aliivibrio fischeri (strain ATCC 700601 / ES114) (Vibrio fischeri).